Reading from the N-terminus, the 87-residue chain is Putative regulatory protein BCG9842_B1272 (87 aa).

This sequence belongs to the RemA family.

This chain is Putative regulatory protein BCG9842_B1272, found in Bacillus cereus (strain G9842).